We begin with the raw amino-acid sequence, 375 residues long: F-box/kelch-repeat protein At4g39240 (375 aa).

The segment covering 1-15 has biased composition (low complexity); sequence MPFSAASSSSVSSIA. A disordered region spans residues 1-27; the sequence is MPFSAASSSSVSSIAEEPPPKKQHDPS. The 47-residue stretch at 31-77 folds into the F-box domain; sequence SSYLLLLPDEIILNCLARLPKCYYPVISLVSKTFRRLIASPEIYVER. Kelch repeat units lie at residues 140-186, 187-232, and 275-321; these read EIYV…FFDG, KLYV…RSFA, and KIYT…GNLA.

The polypeptide is F-box/kelch-repeat protein At4g39240 (Arabidopsis thaliana (Mouse-ear cress)).